Here is an 83-residue protein sequence, read N- to C-terminus: MAELGEADEAELQRLVAAEQQKAQFTAQVHHFMELCWDKCVEKPGNRLDSRTENCLSSCVDRFIDTTLAITSRFAQIVQKGGQ.

At A2 the chain carries N-acetylalanine. A Twin CX3C motif motif is present at residues 36 to 59 (CWDKCVEKPGNRLDSRTENCLSSC). Disulfide bonds link C36–C59 and C40–C55.

It belongs to the small Tim family. Heterohexamer; possibly composed of 3 copies of TIMM8B and 3 copies of TIMM13, named soluble 70 kDa complex. Associates with the TIM22 complex, whose core is composed of TIMM22. In terms of tissue distribution, ubiquitous, with highest expression in heart, kidney, liver and skeletal muscle.

It localises to the mitochondrion inner membrane. Its function is as follows. Probable mitochondrial intermembrane chaperone that participates in the import and insertion of some multi-pass transmembrane proteins into the mitochondrial inner membrane. Also required for the transfer of beta-barrel precursors from the TOM complex to the sorting and assembly machinery (SAM complex) of the outer membrane. Acts as a chaperone-like protein that protects the hydrophobic precursors from aggregation and guide them through the mitochondrial intermembrane space. In Homo sapiens (Human), this protein is Mitochondrial import inner membrane translocase subunit Tim8 B (TIMM8B).